A 331-amino-acid polypeptide reads, in one-letter code: (E)-beta farnesene synthase MBR_03882 (331 aa).

This sequence belongs to the trichodiene synthase family.

It carries out the reaction (2E,6E)-farnesyl diphosphate = (E)-beta-farnesene + diphosphate. Terpene synthase that catalyzes the conversion of (2E,6E)-farnesyl diphosphate (FPP) into the volatile sesquiterpene (E)-beta-farnesene. The sequence is that of (E)-beta farnesene synthase MBR_03882 from Metarhizium brunneum (strain ARSEF 3297).